Consider the following 619-residue polypeptide: Chaperone protein HscA homolog (619 aa).

Belongs to the heat shock protein 70 family.

Chaperone involved in the maturation of iron-sulfur cluster-containing proteins. Has a low intrinsic ATPase activity which is markedly stimulated by HscB. This chain is Chaperone protein HscA homolog, found in Shewanella denitrificans (strain OS217 / ATCC BAA-1090 / DSM 15013).